The chain runs to 365 residues: DNA replication and repair protein RecF (365 aa).

30–37 (GLNAQGKT) is an ATP binding site.

This sequence belongs to the RecF family.

The protein localises to the cytoplasm. Functionally, the RecF protein is involved in DNA metabolism; it is required for DNA replication and normal SOS inducibility. RecF binds preferentially to single-stranded, linear DNA. It also seems to bind ATP. This is DNA replication and repair protein RecF from Chlamydia trachomatis serovar A (strain ATCC VR-571B / DSM 19440 / HAR-13).